Here is a 275-residue protein sequence, read N- to C-terminus: Ribosomal RNA small subunit methyltransferase A (275 aa).

N19, L21, G46, E71, D94, and N117 together coordinate S-adenosyl-L-methionine.

Belongs to the class I-like SAM-binding methyltransferase superfamily. rRNA adenine N(6)-methyltransferase family. RsmA subfamily.

The protein resides in the cytoplasm. It carries out the reaction adenosine(1518)/adenosine(1519) in 16S rRNA + 4 S-adenosyl-L-methionine = N(6)-dimethyladenosine(1518)/N(6)-dimethyladenosine(1519) in 16S rRNA + 4 S-adenosyl-L-homocysteine + 4 H(+). Functionally, specifically dimethylates two adjacent adenosines (A1518 and A1519) in the loop of a conserved hairpin near the 3'-end of 16S rRNA in the 30S particle. May play a critical role in biogenesis of 30S subunits. The sequence is that of Ribosomal RNA small subunit methyltransferase A from Burkholderia multivorans (strain ATCC 17616 / 249).